Reading from the N-terminus, the 290-residue chain is MENVELLIEALPYIKDFHSTTMVIKIGGHAMVNDRILEDTIKDIVLLYFVGIKPVVVHGGGPEISEKMEKFGLKPKFVEGLRVTDKETMEVVEMVLDGKVNSKIVTTFIRNGGKAVGLSGKDGLLIVARKKEMRMKKGEEEVIIDLGFVGETEFVNPEIIRILLDNGFIPVVSPVATDLAGNTYNLNADVVAGDIAAALKAKKLIMLTDVPGILENPDDKSTLISRIRLSELENMRSKGVIRGGMIPKVDAVIKALKSGVERAHIIDGSRPHSILIELFTKEGIGTMVEP.

Substrate contacts are provided by residues Gly-60 to Gly-61, Arg-82, and Asn-185.

Belongs to the acetylglutamate kinase family. ArgB subfamily.

It is found in the cytoplasm. The enzyme catalyses N-acetyl-L-glutamate + ATP = N-acetyl-L-glutamyl 5-phosphate + ADP. The protein operates within amino-acid biosynthesis; L-arginine biosynthesis; N(2)-acetyl-L-ornithine from L-glutamate: step 2/4. Its function is as follows. Catalyzes the ATP-dependent phosphorylation of N-acetyl-L-glutamate. The sequence is that of Acetylglutamate kinase from Archaeoglobus fulgidus (strain ATCC 49558 / DSM 4304 / JCM 9628 / NBRC 100126 / VC-16).